A 156-amino-acid chain; its full sequence is ATP synthase subunit b (156 aa).

A helical transmembrane segment spans residues 12–32 (VAFLIFVLFCMKYVWPPVITA).

This sequence belongs to the ATPase B chain family. F-type ATPases have 2 components, F(1) - the catalytic core - and F(0) - the membrane proton channel. F(1) has five subunits: alpha(3), beta(3), gamma(1), delta(1), epsilon(1). F(0) has three main subunits: a(1), b(2) and c(10-14). The alpha and beta chains form an alternating ring which encloses part of the gamma chain. F(1) is attached to F(0) by a central stalk formed by the gamma and epsilon chains, while a peripheral stalk is formed by the delta and b chains.

The protein resides in the cell inner membrane. Its function is as follows. F(1)F(0) ATP synthase produces ATP from ADP in the presence of a proton or sodium gradient. F-type ATPases consist of two structural domains, F(1) containing the extramembraneous catalytic core and F(0) containing the membrane proton channel, linked together by a central stalk and a peripheral stalk. During catalysis, ATP synthesis in the catalytic domain of F(1) is coupled via a rotary mechanism of the central stalk subunits to proton translocation. In terms of biological role, component of the F(0) channel, it forms part of the peripheral stalk, linking F(1) to F(0). The sequence is that of ATP synthase subunit b from Pseudomonas putida (strain GB-1).